The following is a 172-amino-acid chain: Disulfide bond formation protein B (172 aa).

Topologically, residues Met1–Gln11 are cytoplasmic. The helical transmembrane segment at Phe12–Tyr28 threads the bilayer. Over Val29–Ile46 the chain is Periplasmic. An intrachain disulfide couples Cys38 to Cys41. The helical transmembrane segment at Ala47–Pro63 threads the bilayer. Residues Arg64 to Lys70 are Cytoplasmic-facing. A helical membrane pass occupies residues Ala71–Ala88. Residues Arg89–Met145 are Periplasmic-facing. Cysteines 104 and 131 form a disulfide. A helical membrane pass occupies residues Trp146–Lys164. Over His165–Phe172 the chain is Cytoplasmic.

Belongs to the DsbB family.

Its subcellular location is the cell inner membrane. In terms of biological role, required for disulfide bond formation in some periplasmic proteins. Acts by oxidizing the DsbA protein. The sequence is that of Disulfide bond formation protein B from Xanthomonas campestris pv. campestris (strain 8004).